A 429-amino-acid chain; its full sequence is Gap junction gamma-2 protein (429 aa).

At 1-25 (MTNMSWSFLTRLLEEIHNHSTFVGK) the chain is on the cytoplasmic side. A helical membrane pass occupies residues 26-46 (VWLTVLVVFRIVLTAVGGESI). The Extracellular segment spans residues 47–78 (YSDEQTKFTCNTRQPGCDNVCYDAFAPLSHVR). Residues 79–99 (FWVFQIVVISTPSVMYLGYAV) traverse the membrane as a helical segment. Over 100–214 (HRLARASQDE…EGLMRVYVAQ (115 aa)) the chain is Cytoplasmic. The segment at 106–200 (SQDERRRASR…GPAGQHDGRR (95 aa)) is disordered. A compositionally biased stretch (basic residues) spans 112-123 (RASRRRPSRRAP). The span at 124–138 (RPPLPLPPPPHPGWP) shows a compositional bias: pro residues. The span at 142–173 (DLGEEEPMLGLGEEDEDPGVAEGLGEDEEAED) shows a compositional bias: acidic residues. The chain crosses the membrane as a helical span at residues 215–235 (LVARAAFEVAFLVGQYLLYGF). The Extracellular portion of the chain corresponds to 236–263 (EVRPFFACSRQPCPHVVDCFVSRPTEKT). The chain crosses the membrane as a helical span at residues 264–284 (VFLLVMYVVSCLCLLLNLCEM). The Cytoplasmic portion of the chain corresponds to 285–429 (AHLGLGNAQD…SREGKTTVWI (145 aa)). Disordered regions lie at residues 296–316 (VRGR…PPCA) and 361–429 (LGDL…TVWI). Positions 303–316 (PASPGPMPRPPPCA) are enriched in pro residues. S366 carries the phosphoserine modification. Over residues 372–395 (LPANARGPPKPGAPASGSGSATSG) the composition is skewed to low complexity.

Belongs to the connexin family. Gamma-type subfamily. In terms of assembly, a connexon is composed of a hexamer of connexins. Interacts with TJP1.

The protein resides in the cell membrane. The protein localises to the cell junction. It is found in the gap junction. One gap junction consists of a cluster of closely packed pairs of transmembrane channels, the connexons, through which materials of low MW diffuse from one cell to a neighboring cell. May play a role in myelination in central and peripheral nervous systems. This is Gap junction gamma-2 protein (GJC2) from Bos taurus (Bovine).